A 655-amino-acid polypeptide reads, in one-letter code: p-hydroxybenzoic acid efflux pump subunit AaeB (655 aa).

Transmembrane regions (helical) follow at residues phenylalanine 13–leucine 33, tryptophan 38–proline 58, leucine 69–isoleucine 89, leucine 93–valine 113, tryptophan 121–leucine 141, glutamate 152–isoleucine 172, leucine 370–valine 390, phenylalanine 407–proline 427, glutamine 431–valine 451, methionine 459–phenylalanine 479, and phenylalanine 482–leucine 502.

Belongs to the aromatic acid exporter ArAE (TC 2.A.85) family.

It localises to the cell inner membrane. Its function is as follows. Forms an efflux pump with AaeA. Could function as a metabolic relief valve, allowing to eliminate certain compounds when they accumulate to high levels in the cell. The protein is p-hydroxybenzoic acid efflux pump subunit AaeB of Salmonella arizonae (strain ATCC BAA-731 / CDC346-86 / RSK2980).